A 264-amino-acid polypeptide reads, in one-letter code: Thiazole synthase (264 aa).

Catalysis depends on K106, which acts as the Schiff-base intermediate with DXP. 1-deoxy-D-xylulose 5-phosphate-binding positions include G167, 193 to 194 (AG), and 215 to 216 (NS).

Belongs to the ThiG family. As to quaternary structure, homotetramer. Forms heterodimers with either ThiH or ThiS.

It localises to the cytoplasm. It catalyses the reaction [ThiS sulfur-carrier protein]-C-terminal-Gly-aminoethanethioate + 2-iminoacetate + 1-deoxy-D-xylulose 5-phosphate = [ThiS sulfur-carrier protein]-C-terminal Gly-Gly + 2-[(2R,5Z)-2-carboxy-4-methylthiazol-5(2H)-ylidene]ethyl phosphate + 2 H2O + H(+). It functions in the pathway cofactor biosynthesis; thiamine diphosphate biosynthesis. Catalyzes the rearrangement of 1-deoxy-D-xylulose 5-phosphate (DXP) to produce the thiazole phosphate moiety of thiamine. Sulfur is provided by the thiocarboxylate moiety of the carrier protein ThiS. In vitro, sulfur can be provided by H(2)S. The sequence is that of Thiazole synthase from Azotobacter vinelandii (strain DJ / ATCC BAA-1303).